Consider the following 610-residue polypeptide: MAAGLLPSARAVLALLFLGLALLSVGPAPAQALHNVTAELFGGEAWGTLAAFGDLNSDKQTDLFVLRERNDLIVFLADQSAPYFKPKVKVSLKNFSALVTSVVPGDYDGDSQMDVLLTYFPQNHSNNELGAVIFWGQNQTLDPKNMTILNRTFHDQPLIMDFNGDLIPDVFAITNESSQPQILLGGDLSWHPALTTKSKMRDPHSRAFIDLTEDFTADLFLTTLSASNTFQFEIWENLGGNFSIRSVFEKPKNLVVVGQSAFADFDGDGHMDHLLPGCEDKDCQKSAIYLMRSGTGQWAPVLQDSSNKGTLWGFVPFVHEERPTAIPVPLTLHIGDYNMDGYPDALAILKNTSGSNQQAFLLENVPCNNASCEEVHRMFKVYWDLAGLNLIKDAMVATFFDIYEDGTLDIIVLSKGYTKSDVAIHTLKNNFEADAYFVKVIVLSGLCSSDCPRKITPFGVNQPGPYIMYTTVDANGYLKNGSAGQLSQSAHLALQLPYNVLGLGRSANFLDHLFVGIPRPSGEKSIRKQEWTAIIPNSQLMVIPYPHSVPRSWSAKLYLTPSNIVLLTAVALTGVCVFILAIIAILHWQEKKADDREKRQEAHRFHFDAM.

A signal peptide spans M1–A32. N-linked (GlcNAc...) asparagine glycosylation is found at N35, N94, N123, N138, N145, N150, N175, and N241. One copy of the FG-GAP 1; atypical repeat lies at L98–W135. Residues F153 to L183 form an FG-GAP 2; atypical repeat. Residues V256–M291 form an FG-GAP 3; atypical repeat. N-linked (GlcNAc...) asparagine glycosylation is found at N351, N369, and N480. A helical membrane pass occupies residues I564–A584.

It belongs to the TIP family. As to quaternary structure, interacts with RUVBL1, RUVBL2 and alpha-tubulin.

It localises to the secreted. The protein localises to the cell membrane. Its function is as follows. Modulator of T-cell function. Has a protective effect in graft versus host disease model. The sequence is that of T-cell immunomodulatory protein from Rattus norvegicus (Rat).